Reading from the N-terminus, the 355-residue chain is Gibberellin 3-beta-dioxygenase 4 (355 aa).

The Fe2OG dioxygenase domain maps to 203 to 303 (GRGAIRLNHY…RISIAYLWGG (101 aa)). Residues His227, Asp229, and His284 each coordinate Fe cation. The active site involves Arg294.

It belongs to the iron/ascorbate-dependent oxidoreductase family. GA3OX subfamily. L-ascorbate is required as a cofactor. The cofactor is Fe cation. Expressed in siliques and in seeds, specifically at the rim of the embryo and the outer integument. Also expressed in flowers. Not detected in roots, stems and leaves.

The enzyme catalyses gibberellin A20 + 2-oxoglutarate + O2 = gibberellin A1 + succinate + CO2. It functions in the pathway plant hormone biosynthesis; gibberellin biosynthesis. In terms of biological role, converts the inactive gibberellin (GA) precursors GA9 and GA20 in the bioactives gibberellins GA4 and GA1. Involved in the production of bioactive GA for reproductive development. This Arabidopsis thaliana (Mouse-ear cress) protein is Gibberellin 3-beta-dioxygenase 4.